Reading from the N-terminus, the 430-residue chain is MSKTHLTEQKFSDFALHPQVIEALESKGFHNCTPIQALALPLALSGRDVAGQAQTGTGKTLAFLASTFHYLLSHPANAERQTNQPRALIMAPTRELAVQIHSDAEALSHLTGLKLGLAYGGDGYDKQLKVLENGVDILIGTTGRLIDYAKQNHINLGAIQVVVLDEADRMYDLGFIKDIRWLFRRMPPAAQRLNMLFSATLSYRVRELAFEQMNNAEYVEVEPEQKTGHRIKEELFYPSNEEKMRLLQTLLEEEWPDRCIIFANTKHRCEDIWGHLAADGHRVGLLTGDVAQKKRLRILEEFTQGNLDILVATDVAARGLHIPSVTHVFNYDLPDDCEDYVHRIGRTGRAGQSGFSISLACEEYALNLPAIETYIGHSIPVSKYNSDALMNDLPAPKRLTRPPRSNNGPRRHNNAPRRSGAPRNNRKRAD.

A Q motif motif is present at residues 9 to 37; that stretch reads QKFSDFALHPQVIEALESKGFHNCTPIQA. The 180-residue stretch at 40-219 folds into the Helicase ATP-binding domain; the sequence is LPLALSGRDV…FEQMNNAEYV (180 aa). 53 to 60 is a binding site for ATP; sequence AQTGTGKT. The DEAD box signature appears at 165–168; sequence DEAD. The region spanning 245 to 390 is the Helicase C-terminal domain; it reads RLLQTLLEEE…VSKYNSDALM (146 aa). The disordered stretch occupies residues 392–430; that stretch reads DLPAPKRLTRPPRSNNGPRRHNNAPRRSGAPRNNRKRAD.

The protein belongs to the DEAD box helicase family. RhlB subfamily. Component of the RNA degradosome, which is a multiprotein complex involved in RNA processing and mRNA degradation.

The protein resides in the cytoplasm. The enzyme catalyses ATP + H2O = ADP + phosphate + H(+). In terms of biological role, DEAD-box RNA helicase involved in RNA degradation. Has RNA-dependent ATPase activity and unwinds double-stranded RNA. The sequence is that of ATP-dependent RNA helicase RhlB from Pectobacterium carotovorum subsp. carotovorum (strain PC1).